We begin with the raw amino-acid sequence, 121 residues long: Ribonuclease P protein component (121 aa).

It belongs to the RnpA family. In terms of assembly, consists of a catalytic RNA component (M1 or rnpB) and a protein subunit.

The enzyme catalyses Endonucleolytic cleavage of RNA, removing 5'-extranucleotides from tRNA precursor.. Functionally, RNaseP catalyzes the removal of the 5'-leader sequence from pre-tRNA to produce the mature 5'-terminus. It can also cleave other RNA substrates such as 4.5S RNA. The protein component plays an auxiliary but essential role in vivo by binding to the 5'-leader sequence and broadening the substrate specificity of the ribozyme. This chain is Ribonuclease P protein component, found in Nitrosomonas eutropha (strain DSM 101675 / C91 / Nm57).